A 508-amino-acid polypeptide reads, in one-letter code: Photosystem II CP47 reaction center protein (508 aa).

6 helical membrane passes run 21–36 (AVHI…WAGS), 101–115 (ILFS…IWHW), 140–156 (GIHL…FGAF), 203–218 (IAAG…FHLS), 237–252 (VLSS…AFVV), and 457–472 (SFAL…HGAR).

It belongs to the PsbB/PsbC family. PsbB subfamily. PSII is composed of 1 copy each of membrane proteins PsbA, PsbB, PsbC, PsbD, PsbE, PsbF, PsbH, PsbI, PsbJ, PsbK, PsbL, PsbM, PsbT, PsbX, PsbY, PsbZ, Psb30/Ycf12, at least 3 peripheral proteins of the oxygen-evolving complex and a large number of cofactors. It forms dimeric complexes. It depends on Binds multiple chlorophylls. PSII binds additional chlorophylls, carotenoids and specific lipids. as a cofactor.

It localises to the plastid. The protein localises to the chloroplast thylakoid membrane. Its function is as follows. One of the components of the core complex of photosystem II (PSII). It binds chlorophyll and helps catalyze the primary light-induced photochemical processes of PSII. PSII is a light-driven water:plastoquinone oxidoreductase, using light energy to abstract electrons from H(2)O, generating O(2) and a proton gradient subsequently used for ATP formation. The polypeptide is Photosystem II CP47 reaction center protein (Oenothera argillicola (Appalachian evening primrose)).